We begin with the raw amino-acid sequence, 140 residues long: Large ribosomal subunit protein uL16 (140 aa).

Residues 1-16 (MLMPKRVKHRKQMKGR) are compositionally biased toward basic residues. A disordered region spans residues 1-20 (MLMPKRVKHRKQMKGRMKGD).

Belongs to the universal ribosomal protein uL16 family. As to quaternary structure, part of the 50S ribosomal subunit.

Functionally, binds 23S rRNA and is also seen to make contacts with the A and possibly P site tRNAs. This Geobacter sulfurreducens (strain ATCC 51573 / DSM 12127 / PCA) protein is Large ribosomal subunit protein uL16.